The sequence spans 235 residues: Probable septum site-determining protein MinC (235 aa).

The tract at residues 104 to 125 (KAVRPAPVEPATPSEPPQNANP) is disordered. The segment covering 110-119 (PVEPATPSEP) has biased composition (pro residues).

The protein belongs to the MinC family. In terms of assembly, interacts with MinD and FtsZ.

In terms of biological role, cell division inhibitor that blocks the formation of polar Z ring septums. Rapidly oscillates between the poles of the cell to destabilize FtsZ filaments that have formed before they mature into polar Z rings. Prevents FtsZ polymerization. This Salmonella enteritidis PT4 (strain P125109) protein is Probable septum site-determining protein MinC.